The chain runs to 412 residues: cAMP-dependent protein kinase regulatory subunit (412 aa).

The dimerization and phosphorylation stretch occupies residues 1 to 142; it reads MSFEEVYEEL…RLKRSVAGNF (142 aa). A Pseudophosphorylation motif motif is present at residues 101–105; that stretch reads RRQSV. Position 104 is a phosphoserine (Ser104). 3',5'-cyclic AMP contacts are provided by residues 143–277, Glu224, Arg233, 278–412, Glu344, and Arg353; these read LFKN…EEVP and ILSS…STKA. A disordered region spans residues 392 to 412; that stretch reads MGMDNEYGDQSLHRSPPSTKA.

Belongs to the cAMP-dependent kinase regulatory chain family. In terms of assembly, tetramer, composed of 2 regulatory (R) and 2 catalytic (C) subunits. In the presence of cAMP it dissociates into 2 active monomeric C subunits and an R dimer.

The chain is cAMP-dependent protein kinase regulatory subunit (cgs1) from Schizosaccharomyces pombe (strain 972 / ATCC 24843) (Fission yeast).